Here is a 591-residue protein sequence, read N- to C-terminus: Probable metalloprotease ARX1 (591 aa).

This sequence belongs to the peptidase M24 family. As to quaternary structure, component of the nucleoplasmic and cytoplasmic pre-60S ribosomal particles.

It is found in the cytoplasm. It localises to the nucleus. Probable metalloprotease involved in proper assembly of pre-ribosomal particles during the biogenesis of the 60S ribosomal subunit. Accompanies the pre-60S particles to the cytoplasm. This Eremothecium gossypii (strain ATCC 10895 / CBS 109.51 / FGSC 9923 / NRRL Y-1056) (Yeast) protein is Probable metalloprotease ARX1 (ARX1).